Consider the following 592-residue polypeptide: Alpha-1,3-galactosidase B (592 aa).

The signal sequence occupies residues 1–14 (MKLLSVLSLSLVLS). C15 is lipidated: N-palmitoyl cysteine. A lipid anchor (S-diacylglycerol cysteine) is attached at C15. PbH1 repeat units follow at residues 429–451 (TPEVLFSGNVIRNNRARGSLFST), 452–474 (PRKTIVENNLFDHTSGAAILLCG), and 485–538 (CRHV…VIED).

It belongs to the glycosyl hydrolase 110 family. B subfamily.

Its subcellular location is the cell membrane. The catalysed reaction is Hydrolysis of terminal, non-reducing branched (1-&gt;3)-alpha-D-galactosidic residues, producing free D-galactose.. It catalyses the reaction Hydrolysis of terminal, non-reducing linear (1-&gt;3)-alpha-D-galactosidic residues, producing free D-galactose.. The enzyme catalyses Hydrolysis of terminal, non-reducing alpha-D-galactose residues in alpha-D-galactosides, including galactose oligosaccharides, galactomannans and galactolipids.. Alpha-galactosidase. Removes both branched alpha-1,3-linked galactose residues of blood group B antigens and linear alpha-1,3-linked galactose structures. The chain is Alpha-1,3-galactosidase B (glaB1) from Phocaeicola vulgatus (strain ATCC 8482 / DSM 1447 / JCM 5826 / CCUG 4940 / NBRC 14291 / NCTC 11154) (Bacteroides vulgatus).